A 2313-amino-acid chain; its full sequence is Serine/threonine-protein kinase smg-1 (2313 aa).

Over residues 779–791 (NRKSSDKKPKSTT) the composition is skewed to basic and acidic residues. The disordered stretch occupies residues 779-798 (NRKSSDKKPKSTTEDVPPPA). One can recognise an FAT domain in the interval 1045–1528 (ARERLQLVES…VFQVVSGAAS (484 aa)). An HEAT repeat occupies 1478-1514 (VHVWKEILPQLFARLSHPSDHIRKTLVDLISRVCTAA). One can recognise a PI3K/PI4K catalytic domain in the interval 1746–2091 (VADNVTILPT…DTIELFQLRV (346 aa)). Residues 1752 to 1758 (ILPTKTR) are G-loop. Residues 1954 to 1962 (GLGDRHLDN) are catalytic loop. Residues 1974–1998 (HIDYNICFDKGKILRIPETVPFRLS) are activation loop. The FATC domain occupies 2281 to 2313 (RKLSPREEADVLIAEATSSANLAQMYEGWTAWV).

The protein belongs to the PI3/PI4-kinase family. As to quaternary structure, component of a post-splicing multiprotein NMD complex. The cofactor is Mn(2+).

The protein resides in the cytoplasm. The catalysed reaction is L-seryl-[protein] + ATP = O-phospho-L-seryl-[protein] + ADP + H(+). The enzyme catalyses L-threonyl-[protein] + ATP = O-phospho-L-threonyl-[protein] + ADP + H(+). In terms of biological role, serine/threonine protein kinase involved in mRNA surveillance. Recognizes the substrate consensus sequence [ST]-Q. Involved in nonsense-mediated decay (NMD) of mRNAs containing premature stop codons by phosphorylating smg-2. This is Serine/threonine-protein kinase smg-1 (smg-1) from Caenorhabditis briggsae.